A 313-amino-acid polypeptide reads, in one-letter code: MNDTVHKHITVLLHEAVDGLAIKPSGIYIDGTFGRGGHSRLILSKLSEQGRLIATDRDPRAIAEANTIDDTRFQIVHTAFSAIPDVCEQLGLTGKIDGILLDLGVSSPQLDDAERGFSFMRDGPLDMRMDTTKGLSAAEWLAQVSADDLAWVLKTFGEERFAKRIAQAVVSYNKSATDKISRTLQLAQIIADAVPFKDKHKHPATRSFQAIRIFINSELDELEKALQSALSVLAPEGRLSIISFHSLEDRMVKQFMKKNSKGMDVPKGLPILESELNKNIPLKIIGKAIMPSEAEIEANPRSRSAVLRIAEKR.

S-adenosyl-L-methionine is bound by residues 36–38, Asp56, Phe80, Asp102, and Gln109; that span reads GGH.

It belongs to the methyltransferase superfamily. RsmH family.

The protein localises to the cytoplasm. The catalysed reaction is cytidine(1402) in 16S rRNA + S-adenosyl-L-methionine = N(4)-methylcytidine(1402) in 16S rRNA + S-adenosyl-L-homocysteine + H(+). Its function is as follows. Specifically methylates the N4 position of cytidine in position 1402 (C1402) of 16S rRNA. This Actinobacillus pleuropneumoniae serotype 7 (strain AP76) protein is Ribosomal RNA small subunit methyltransferase H.